Reading from the N-terminus, the 210-residue chain is Probable GTP-binding protein EngB (210 aa).

Residues 25–199 form the EngB-type G domain; sequence CGIEVAFAGR…RQKLDSWFSE (175 aa). Residues 33–40, 60–64, 78–81, 145–148, and 178–180 contribute to the GTP site; these read GRSNAGKS, GRTQL, DLPG, TKAD, and FSS. Residues Ser-40 and Thr-62 each contribute to the Mg(2+) site.

Belongs to the TRAFAC class TrmE-Era-EngA-EngB-Septin-like GTPase superfamily. EngB GTPase family. The cofactor is Mg(2+).

Its function is as follows. Necessary for normal cell division and for the maintenance of normal septation. In Salmonella dublin (strain CT_02021853), this protein is Probable GTP-binding protein EngB.